A 706-amino-acid polypeptide reads, in one-letter code: Glycine--tRNA ligase beta subunit (706 aa).

It belongs to the class-II aminoacyl-tRNA synthetase family. Tetramer of two alpha and two beta subunits.

The protein resides in the cytoplasm. The enzyme catalyses tRNA(Gly) + glycine + ATP = glycyl-tRNA(Gly) + AMP + diphosphate. The protein is Glycine--tRNA ligase beta subunit of Acidobacterium capsulatum (strain ATCC 51196 / DSM 11244 / BCRC 80197 / JCM 7670 / NBRC 15755 / NCIMB 13165 / 161).